We begin with the raw amino-acid sequence, 433 residues long: Serine--tRNA ligase (433 aa).

235–237 (TSE) is an L-serine binding site. 266 to 268 (RSE) is a binding site for ATP. Glu289 lines the L-serine pocket. Residue 353–356 (EISS) participates in ATP binding. Ser388 contributes to the L-serine binding site.

This sequence belongs to the class-II aminoacyl-tRNA synthetase family. Type-1 seryl-tRNA synthetase subfamily. As to quaternary structure, homodimer. The tRNA molecule binds across the dimer.

Its subcellular location is the cytoplasm. The catalysed reaction is tRNA(Ser) + L-serine + ATP = L-seryl-tRNA(Ser) + AMP + diphosphate + H(+). It carries out the reaction tRNA(Sec) + L-serine + ATP = L-seryl-tRNA(Sec) + AMP + diphosphate + H(+). It participates in aminoacyl-tRNA biosynthesis; selenocysteinyl-tRNA(Sec) biosynthesis; L-seryl-tRNA(Sec) from L-serine and tRNA(Sec): step 1/1. Functionally, catalyzes the attachment of serine to tRNA(Ser). Is also able to aminoacylate tRNA(Sec) with serine, to form the misacylated tRNA L-seryl-tRNA(Sec), which will be further converted into selenocysteinyl-tRNA(Sec). The sequence is that of Serine--tRNA ligase from Burkholderia cepacia (Pseudomonas cepacia).